We begin with the raw amino-acid sequence, 247 residues long: Lys-63-specific deubiquitinase BRCC36 (247 aa).

A2 carries the N-acetylalanine modification. An MPN domain is found at 12–179 (VHLESDAFLV…YTCFQSIQAQ (168 aa)). Residues H122, H124, and D135 each contribute to the Zn(2+) site. Residues 122–135 (HSHPHITVWPSHVD) carry the JAMM motif motif. S189 carries the post-translational modification Phosphoserine.

This sequence belongs to the peptidase M67A family. BRCC36 subfamily. As to quaternary structure, component of the ARISC complex, at least composed of UIMC1/RAP80, ABRAXAS1, BRCC3/BRCC36, BABAM2 and BABAM1/NBA1. Component of the BRCA1-A complex, at least composed of BRCA1, BARD1, UIMC1/RAP80, ABRAXAS1, BRCC3/BRCC36, BABAM2 and BABAM1/NBA1. In the BRCA1-A complex, interacts directly with ABRAXAS1 and BABAM2. Component of the BRISC complex, at least composed of ABRAXAS2, BRCC3/BRCC36, BABAM2 and BABAM1/NBA1. Identified in a complex with SHMT2 and the other subunits of the BRISC complex. In the BRISC complex, interacts directly with ABRAXAS2. Identified in a complex with ABRAXAS2 and NUMA1. The BRISC complex interacts with the CSN complex. Component of the BRCA1/BRCA2 containing complex (BRCC), which also contains BRCA1, BRCA2, BARD1, BABAM2 and RAD51. BRCC is a ubiquitin E3 ligase complex that enhances cellular survival following DNA damage. Interacts with BRCA1. Binds polyubiquitin. Interacts with PWWP2B. Interacts with HDAC1; this interaction is enhanced in the presence of PWWP2B. Zn(2+) is required as a cofactor.

It is found in the nucleus. The protein localises to the cytoplasm. It localises to the cytoskeleton. Its subcellular location is the spindle pole. Metalloprotease that specifically cleaves 'Lys-63'-linked polyubiquitin chains. Does not have activity toward 'Lys-48'-linked polyubiquitin chains. Component of the BRCA1-A complex, a complex that specifically recognizes 'Lys-63'-linked ubiquitinated histones H2A and H2AX at DNA lesions sites, leading to target the BRCA1-BARD1 heterodimer to sites of DNA damage at double-strand breaks (DSBs). In the BRCA1-A complex, it specifically removes 'Lys-63'-linked ubiquitin on histones H2A and H2AX, antagonizing the RNF8-dependent ubiquitination at double-strand breaks (DSBs). Catalytic subunit of the BRISC complex, a multiprotein complex that specifically cleaves 'Lys-63'-linked ubiquitin in various substrates. Mediates the specific 'Lys-63'-specific deubiquitination associated with the COP9 signalosome complex (CSN), via the interaction of the BRISC complex with the CSN complex. The BRISC complex is required for normal mitotic spindle assembly and microtubule attachment to kinetochores via its role in deubiquitinating NUMA1. Plays a role in interferon signaling via its role in the deubiquitination of the interferon receptor IFNAR1; deubiquitination increases IFNAR1 activity by enhancing its stability and cell surface expression. Acts as a regulator of the NLRP3 inflammasome by mediating deubiquitination of NLRP3, leading to NLRP3 inflammasome assembly. Down-regulates the response to bacterial lipopolysaccharide (LPS) via its role in IFNAR1 deubiquitination. Deubiquitinates HDAC1 and PWWP2B leading to their stabilization. This Pongo abelii (Sumatran orangutan) protein is Lys-63-specific deubiquitinase BRCC36 (BRCC3).